We begin with the raw amino-acid sequence, 395 residues long: Dual specificity protein phosphatase 4 (395 aa).

An N-acetylvaline modification is found at V2. Residues 42–160 form the Rhodanese domain; the sequence is SGGKCLLLDC…FSSEYPEFCS (119 aa). The region spanning 196-337 is the Tyrosine-protein phosphatase domain; the sequence is GPVEILPFLY…LLQFESQVLT (142 aa). Catalysis depends on C281, which acts as the Phosphocysteine intermediate. Phosphoserine; by MAPK is present on residues S387 and S392.

Belongs to the protein-tyrosine phosphatase family. Non-receptor class dual specificity subfamily. In terms of assembly, hollow spherical complex composed of 24 subunits with pseudooctahedral symmetry, has a tetramer as the basic unit. Post-translationally, phosphorylation in the C-terminus by ERK1/2 inhibits proteasomal degradation and stabilizes the protein. As to expression, expressed at moderate levels in nearly all tissues and cells including brain, spleen, and testes with the higher expression in the heart and lung and lower expression in skeletal muscle and kidney. Undetectable in liver. Expressed in many areas of the brain with very strong expression in the hippocampus, piriform cortex, and the suprachiasmatic nucleus.

The protein localises to the nucleus. The catalysed reaction is O-phospho-L-tyrosyl-[protein] + H2O = L-tyrosyl-[protein] + phosphate. It catalyses the reaction O-phospho-L-seryl-[protein] + H2O = L-seryl-[protein] + phosphate. The enzyme catalyses O-phospho-L-threonyl-[protein] + H2O = L-threonyl-[protein] + phosphate. Its function is as follows. Regulates mitogenic signal transduction by dephosphorylating both Thr and Tyr residues on MAP kinases ERK1 and ERK2. In Rattus norvegicus (Rat), this protein is Dual specificity protein phosphatase 4 (Dusp4).